The chain runs to 181 residues: Caltractin ICL1d (181 aa).

Residues 1–29 (MARRGQQPPPQQAPPAQKNQTGKFNPAEF) are disordered. EF-hand domains follow at residues 37-72 (EEVL…LGFE), 73-108 (AKNQ…RISE), 110-145 (DSKA…LGET), and 146-181 (MDDS…KTFA). Residues Asp50, Asp52, Thr54, Ser56, Glu61, Asp86, Asp88, Ser90, Gln92, and Glu97 each coordinate Ca(2+).

Belongs to the centrin family. Monomer.

The protein localises to the cytoplasm. Its subcellular location is the cytoskeleton. Its function is as follows. Plays a fundamental role in microtubule organizing center structure and function. Component of the infraciliary lattice (ICL) and the ciliary basal bodies. This chain is Caltractin ICL1d (Icl1d), found in Paramecium tetraurelia.